The sequence spans 305 residues: tRNA pseudouridine synthase B (305 aa).

Aspartate 39 serves as the catalytic Nucleophile.

This sequence belongs to the pseudouridine synthase TruB family. Type 1 subfamily.

The catalysed reaction is uridine(55) in tRNA = pseudouridine(55) in tRNA. Responsible for synthesis of pseudouridine from uracil-55 in the psi GC loop of transfer RNAs. The sequence is that of tRNA pseudouridine synthase B from Staphylococcus aureus (strain bovine RF122 / ET3-1).